The sequence spans 49 residues: Large ribosomal subunit protein bL33C (49 aa).

Positions lysine 21–lysine 49 are disordered. The segment covering asparagine 25 to lysine 49 has biased composition (basic and acidic residues).

Belongs to the bacterial ribosomal protein bL33 family.

This is Large ribosomal subunit protein bL33C from Bacillus licheniformis (strain ATCC 14580 / DSM 13 / JCM 2505 / CCUG 7422 / NBRC 12200 / NCIMB 9375 / NCTC 10341 / NRRL NRS-1264 / Gibson 46).